A 332-amino-acid polypeptide reads, in one-letter code: Ketol-acid reductoisomerase (NADP(+)) (332 aa).

In terms of domain architecture, KARI N-terminal Rossmann spans 1–182 (MAVIYYDKDC…GSNRAGILET (182 aa)). NADP(+) is bound by residues 25-28 (YGAQ) and 83-86 (DTSQ). His108 is an active-site residue. Position 134 (Gly134) interacts with NADP(+). The region spanning 183–328 (TFAEETETDL…AELRSMMSWL (146 aa)) is the KARI C-terminal knotted domain. The Mg(2+) site is built by Asp191, Glu195, Glu227, and Glu231. Ser252 provides a ligand contact to substrate.

It belongs to the ketol-acid reductoisomerase family. The cofactor is Mg(2+).

The enzyme catalyses (2R)-2,3-dihydroxy-3-methylbutanoate + NADP(+) = (2S)-2-acetolactate + NADPH + H(+). It carries out the reaction (2R,3R)-2,3-dihydroxy-3-methylpentanoate + NADP(+) = (S)-2-ethyl-2-hydroxy-3-oxobutanoate + NADPH + H(+). It functions in the pathway amino-acid biosynthesis; L-isoleucine biosynthesis; L-isoleucine from 2-oxobutanoate: step 2/4. The protein operates within amino-acid biosynthesis; L-valine biosynthesis; L-valine from pyruvate: step 2/4. Functionally, involved in the biosynthesis of branched-chain amino acids (BCAA). Catalyzes an alkyl-migration followed by a ketol-acid reduction of (S)-2-acetolactate (S2AL) to yield (R)-2,3-dihydroxy-isovalerate. In the isomerase reaction, S2AL is rearranged via a Mg-dependent methyl migration to produce 3-hydroxy-3-methyl-2-ketobutyrate (HMKB). In the reductase reaction, this 2-ketoacid undergoes a metal-dependent reduction by NADPH to yield (R)-2,3-dihydroxy-isovalerate. In Dehalococcoides mccartyi (strain CBDB1), this protein is Ketol-acid reductoisomerase (NADP(+)).